The chain runs to 968 residues: MKSQNNKEYKSEFSYKETLNLLKTDFSMRANSVLREPEIQNFWAKNNIDFELGSNNSGKIFTLHDGPPYANGALHMGHALNKVLKDIINKYKTLRGFRVHYVPGWDCHGLPIELKVLQNLKSSERKNLDTLNLRKKATDYAYVQINNQMEGFKRWGIWGNWDNPYLTLKKSYESAQIGVFGKMFLNGYIYRGLKPVHWSPSSRTALAEAELEYPDEHYSKSIYVSLKITKLSDEILLKFYQENPNFKKDFFLSNSFITIWTTTPWTIPANEAVAVNPKINYVFAIDEEKRIYLLAKELSSEISNKFNKDLTTLLEVKGVTLEDIEYQHPTKNKNCRIVIGGDYITIESGTGIVHTAPGHGIDDFNVGRKYDLPTTCVVDEKGNLNEYSGQFQGSNVLKDANDLIIDYLEEKDLLLLQENYKHRYPYDWRTKKPTIFRATEQWFASVNGFRSSALKAIEDVEWIPATGKKRIYSMVVGRGDWCISRQRSWGLPIPVFYKKNGNEILLNSEIINHIQKLFSEHGADIWWDWDVKHLLPDNYVKESDLWKKGTDTMDVWFDSGSSWAAVCEQRSELKYPADLYLEGSDQHRGWFQSSLLTSVAVNNKPPYKKVLTHGFALDENGRKMSKSLGNVVDPNIIINGGNNKKIEPAYGADVLRLWVSSVDYSVDVPIGSNILKQLSDVYRKVRNTARYLLGNIHDYDPNIDSFEIDQLPLLDQWMLGRLVEVTDQISNAYENYEFSKFFQILQSFCVVDLSNFYLDIAKDRLYVSSKSQFRRRSCQFVMSKVVENLAVLISPVLCHMAEDIWQNVPYSTKEKSVFQRGWPNFSQSWKNEILNEHIANLRNLRVEINKAIEGCRNKQIIGAALETEVNYLPKDKVVKDSLTWLKKFGNEEVDLFRDWLIVSNFQVVSELAKNSLIIDNNEIGKIQILKAHGQKCDRCWHYQEEIFSGIQNTKLCKRCSHIINLEFT.

A 'HIGH' region motif is present at residues 68-78 (PYANGALHMGH). Residue E582 participates in L-isoleucyl-5'-AMP binding. The 'KMSKS' region signature appears at 623–627 (KMSKS). K626 provides a ligand contact to ATP. Residues C936, C939, C956, and C959 each contribute to the Zn(2+) site.

This sequence belongs to the class-I aminoacyl-tRNA synthetase family. IleS type 1 subfamily. Monomer. Zn(2+) is required as a cofactor.

It is found in the cytoplasm. The enzyme catalyses tRNA(Ile) + L-isoleucine + ATP = L-isoleucyl-tRNA(Ile) + AMP + diphosphate. Catalyzes the attachment of isoleucine to tRNA(Ile). As IleRS can inadvertently accommodate and process structurally similar amino acids such as valine, to avoid such errors it has two additional distinct tRNA(Ile)-dependent editing activities. One activity is designated as 'pretransfer' editing and involves the hydrolysis of activated Val-AMP. The other activity is designated 'posttransfer' editing and involves deacylation of mischarged Val-tRNA(Ile). The polypeptide is Isoleucine--tRNA ligase (Prochlorococcus marinus (strain MIT 9312)).